The chain runs to 281 residues: Bifunctional protein FolD (281 aa).

Residues 165–167, T192, and V233 contribute to the NADP(+) site; that span reads GRG.

This sequence belongs to the tetrahydrofolate dehydrogenase/cyclohydrolase family. As to quaternary structure, homodimer.

It catalyses the reaction (6R)-5,10-methylene-5,6,7,8-tetrahydrofolate + NADP(+) = (6R)-5,10-methenyltetrahydrofolate + NADPH. The catalysed reaction is (6R)-5,10-methenyltetrahydrofolate + H2O = (6R)-10-formyltetrahydrofolate + H(+). It functions in the pathway one-carbon metabolism; tetrahydrofolate interconversion. Its function is as follows. Catalyzes the oxidation of 5,10-methylenetetrahydrofolate to 5,10-methenyltetrahydrofolate and then the hydrolysis of 5,10-methenyltetrahydrofolate to 10-formyltetrahydrofolate. The chain is Bifunctional protein FolD from Mycobacterium avium (strain 104).